We begin with the raw amino-acid sequence, 414 residues long: Esterase FrsA (414 aa).

The protein belongs to the FrsA family.

The catalysed reaction is a carboxylic ester + H2O = an alcohol + a carboxylate + H(+). Its function is as follows. Catalyzes the hydrolysis of esters. The protein is Esterase FrsA of Shigella sonnei (strain Ss046).